Reading from the N-terminus, the 365-residue chain is 4-hydroxy-3-methylbut-2-en-1-yl diphosphate synthase (flavodoxin) (365 aa).

Residues cysteine 270, cysteine 273, cysteine 305, and glutamate 312 each coordinate [4Fe-4S] cluster.

It belongs to the IspG family. It depends on [4Fe-4S] cluster as a cofactor.

It carries out the reaction (2E)-4-hydroxy-3-methylbut-2-enyl diphosphate + 2 oxidized [2Fe-2S]-[ferredoxin] + H2O = 2-C-methyl-D-erythritol 2,4-cyclic diphosphate + 2 reduced [2Fe-2S]-[ferredoxin] + H(+). The enzyme catalyses (2E)-4-hydroxy-3-methylbut-2-enyl diphosphate + oxidized [flavodoxin] + H2O + 2 H(+) = 2-C-methyl-D-erythritol 2,4-cyclic diphosphate + reduced [flavodoxin]. It functions in the pathway isoprenoid biosynthesis; isopentenyl diphosphate biosynthesis via DXP pathway; isopentenyl diphosphate from 1-deoxy-D-xylulose 5-phosphate: step 5/6. Its function is as follows. Converts 2C-methyl-D-erythritol 2,4-cyclodiphosphate (ME-2,4cPP) into 1-hydroxy-2-methyl-2-(E)-butenyl 4-diphosphate. Involved in density-dependent regulation of 2'-N-acetyltransferase. The chain is 4-hydroxy-3-methylbut-2-en-1-yl diphosphate synthase (flavodoxin) from Providencia stuartii.